We begin with the raw amino-acid sequence, 595 residues long: Aspartate--tRNA ligase (595 aa).

L-aspartate is bound at residue Glu-180. Residues 204–207 are aspartate; it reads QLFK. Arg-226 contributes to the L-aspartate binding site. Residues 226–228 and Gln-235 each bind ATP; that span reads RDE. Residue His-454 coordinates L-aspartate. Residue Glu-488 coordinates ATP. Arg-495 lines the L-aspartate pocket. Residue 540-543 coordinates ATP; it reads GLDR.

It belongs to the class-II aminoacyl-tRNA synthetase family. Type 1 subfamily. As to quaternary structure, homodimer.

It localises to the cytoplasm. The catalysed reaction is tRNA(Asp) + L-aspartate + ATP = L-aspartyl-tRNA(Asp) + AMP + diphosphate. Functionally, catalyzes the attachment of L-aspartate to tRNA(Asp) in a two-step reaction: L-aspartate is first activated by ATP to form Asp-AMP and then transferred to the acceptor end of tRNA(Asp). The polypeptide is Aspartate--tRNA ligase (Clostridium acetobutylicum (strain ATCC 824 / DSM 792 / JCM 1419 / IAM 19013 / LMG 5710 / NBRC 13948 / NRRL B-527 / VKM B-1787 / 2291 / W)).